The primary structure comprises 294 residues: Ribosomal protein L11 methyltransferase (294 aa).

S-adenosyl-L-methionine-binding residues include Thr-144, Gly-165, Asp-187, and Asn-229.

This sequence belongs to the methyltransferase superfamily. PrmA family.

Its subcellular location is the cytoplasm. It carries out the reaction L-lysyl-[protein] + 3 S-adenosyl-L-methionine = N(6),N(6),N(6)-trimethyl-L-lysyl-[protein] + 3 S-adenosyl-L-homocysteine + 3 H(+). In terms of biological role, methylates ribosomal protein L11. This is Ribosomal protein L11 methyltransferase from Pseudomonas aeruginosa (strain LESB58).